The primary structure comprises 167 residues: Ubiquitin-conjugating enzyme E2 15 (167 aa).

One can recognise a UBC core domain in the interval 5 to 165 (ASEQLLRKQL…VRRLVRRSIE (161 aa)). C90 serves as the catalytic Glycyl thioester intermediate.

It belongs to the ubiquitin-conjugating enzyme family.

The catalysed reaction is S-ubiquitinyl-[E1 ubiquitin-activating enzyme]-L-cysteine + [E2 ubiquitin-conjugating enzyme]-L-cysteine = [E1 ubiquitin-activating enzyme]-L-cysteine + S-ubiquitinyl-[E2 ubiquitin-conjugating enzyme]-L-cysteine.. It participates in protein modification; protein ubiquitination. Catalyzes the covalent attachment of ubiquitin to other proteins. Has a role in the formation of chromatin structures that influence the localization of transcriptional silencing factors. This chain is Ubiquitin-conjugating enzyme E2 15 (ubc15), found in Schizosaccharomyces pombe (strain 972 / ATCC 24843) (Fission yeast).